A 1062-amino-acid polypeptide reads, in one-letter code: Protein P1-P2 (1062 aa).

The N-terminal stretch at 1–20 (MNRFTAYAALFFMFSLCSTA) is a signal peptide. The next 3 membrane-spanning stretches (helical) occupy residues 121–141 (AASV…WTLA), 144–164 (ITLF…LGCI), and 172–192 (ALSL…KIIW). One can recognise a Peptidase S39 domain in the interval 207–399 (VEGYKGFSVP…GITSPNYVFE (193 aa)). Catalysis depends on for protease activity residues H255, D286, and S354. A disordered region spans residues 455–560 (ATNAPAEKTA…QTKEARKAWR (106 aa)). Residues 463-484 (TAQTNSAEKTAPSTSAEKTALT) show a composition bias toward polar residues. The span at 497–511 (QNKRQLRHPRRRYKR) shows a compositional bias: basic residues. The span at 551-560 (QTKEARKAWR) shows a compositional bias: basic and acidic residues. One can recognise a RdRp catalytic domain in the interval 859 to 974 (EYTRPTDCSG…APNSDLEEYK (116 aa)).

Specific enzymatic cleavages in vivo yield mature proteins. The protease probably cleaves itself and releases the RdRp (Potential). Cleavages have been shown in the P1 protein, but since the N-terminus containing the serine protease is shared between P1 and P1-P2, cleavages should also occur within the P1-P2 protein.

Its subcellular location is the membrane. The enzyme catalyses RNA(n) + a ribonucleoside 5'-triphosphate = RNA(n+1) + diphosphate. In terms of biological role, precursor from which the RNA-dependent RNA polymerase (RdRp) is probably released. RNA-dependent RNA polymerase plays an essential role in virus replication (Potential). The protein is Protein P1-P2 of Potato leafroll virus (strain Potato/Scotland/strain 1/1984) (PLrV).